A 721-amino-acid chain; its full sequence is Catalase-peroxidase 1 (721 aa).

Residues 98 to 223 (WHAAGSYRVA…LAAVQMGLIY (126 aa)) constitute a cross-link (tryptophyl-tyrosyl-methioninium (Trp-Tyr) (with M-249)). The active-site Proton acceptor is the His99. Positions 223–249 (YVNPEGVNGQPDPLRTAQDVRVTFGRM) form a cross-link, tryptophyl-tyrosyl-methioninium (Tyr-Met) (with W-98). His264 serves as a coordination point for heme b.

Belongs to the peroxidase family. Peroxidase/catalase subfamily. As to quaternary structure, homodimer or homotetramer. The cofactor is heme b. Post-translationally, formation of the three residue Trp-Tyr-Met cross-link is important for the catalase, but not the peroxidase activity of the enzyme.

The catalysed reaction is H2O2 + AH2 = A + 2 H2O. It carries out the reaction 2 H2O2 = O2 + 2 H2O. In terms of biological role, bifunctional enzyme with both catalase and broad-spectrum peroxidase activity. This is Catalase-peroxidase 1 from Legionella pneumophila (strain Corby).